A 477-amino-acid polypeptide reads, in one-letter code: MSPQTETKASVGFKAGVKEYKLTYYTPEYQTKDTDILAAFRVTPQPGVPPEEAGAAVAAESSTGTWTTVWTDGLTSLDRYKGRCYRIERVVGEKDQYIAYVAYPLDLFEEGSVTNMFTSIVGNVFGFKALRALRLEDLRIPPAYVKTFQGPPHGIQVERDKLNKYGRPLLGCTIKPKLGLSAKNYGRAVYECLRGGLDFTKDDENVNSQPFMRWRDRFLFCAEAIYKAQTETGEIKGHYLNATAGTCEEMIKRAVFARELGVPIVMHDYLTGGFTANTSLAHYCRDNGLLLHIHRAMHAVIDRQKNHGIHFRVLAKALRMSGGDHIHSGTVVGKLEGERDITLGFVDLLRDDFVEQDRSRGIYFTQDWVSLPGVLPVASGGIHVWHMPALTEIFGDDSVLQFGGGTLGHPWGNAPGAVANRLALEACVQARNEGRDLAQEGNEIIREACKWSPELAAACQVWKEIVFNFAAVDVLDK.

A propeptide spanning residues 1–2 (MS) is cleaved from the precursor. Pro-3 carries the post-translational modification N-acetylproline. The residue at position 14 (Lys-14) is an N6,N6,N6-trimethyllysine. Residues Asn-123 and Thr-173 each coordinate substrate. Lys-175 acts as the Proton acceptor in catalysis. Lys-177 provides a ligand contact to substrate. Mg(2+) contacts are provided by Lys-201, Asp-203, and Glu-204. Lys-201 carries the post-translational modification N6-carboxylysine. The Proton acceptor role is filled by His-294. Substrate is bound by residues Arg-295, His-327, and Ser-379.

It belongs to the RuBisCO large chain family. Type I subfamily. In terms of assembly, heterohexadecamer of 8 large chains and 8 small chains; disulfide-linked. The disulfide link is formed within the large subunit homodimers. Mg(2+) is required as a cofactor. In terms of processing, the disulfide bond which can form in the large chain dimeric partners within the hexadecamer appears to be associated with oxidative stress and protein turnover.

The protein localises to the plastid. Its subcellular location is the chloroplast. It catalyses the reaction 2 (2R)-3-phosphoglycerate + 2 H(+) = D-ribulose 1,5-bisphosphate + CO2 + H2O. The catalysed reaction is D-ribulose 1,5-bisphosphate + O2 = 2-phosphoglycolate + (2R)-3-phosphoglycerate + 2 H(+). Functionally, ruBisCO catalyzes two reactions: the carboxylation of D-ribulose 1,5-bisphosphate, the primary event in carbon dioxide fixation, as well as the oxidative fragmentation of the pentose substrate in the photorespiration process. Both reactions occur simultaneously and in competition at the same active site. The chain is Ribulose bisphosphate carboxylase large chain from Nicotiana acuminata (Acuminate tobacco).